Reading from the N-terminus, the 1463-residue chain is Probable ATP-dependent RNA helicase spindle-E (1463 aa).

One can recognise a Helicase ATP-binding domain in the interval 131-296 (LKAIRENPVV…FKIPGPNSLF (166 aa)). 144–151 (GMTGCGKT) is an ATP binding site. The DEAH box motif lies at 243-246 (DEVH). Residues 348-531 (VCDRFIDEFE…NVVLKTKLLD (184 aa)) form the Helicase C-terminal domain. Residues 951–1016 (AFKQRDIVAA…QLRGTPLDMF (66 aa)) form the Tudor domain.

Belongs to the DEAD box helicase family. DEAH subfamily.

Its subcellular location is the cytoplasm. The enzyme catalyses ATP + H2O = ADP + phosphate + H(+). Functionally, probable ATP-binding RNA helicase which plays a central role during gametogenesis by repressing transposable elements and preventing their mobilization, which is essential for the germline integrity. Acts via the piRNA metabolic process, which mediates the repression of transposable elements during meiosis by forming complexes composed of piRNAs and Piwi proteins and govern the methylation and subsequent repression of transposons. This Anopheles gambiae (African malaria mosquito) protein is Probable ATP-dependent RNA helicase spindle-E (spn-E).